A 323-amino-acid polypeptide reads, in one-letter code: tRNA dimethylallyltransferase (323 aa).

Position 12 to 19 (Gly12 to Thr19) interacts with ATP. A substrate-binding site is contributed by Thr14–Thr19. 2 interaction with substrate tRNA regions span residues Asp37–Leu40 and Gln161–Arg165.

It belongs to the IPP transferase family. Monomer. The cofactor is Mg(2+).

The enzyme catalyses adenosine(37) in tRNA + dimethylallyl diphosphate = N(6)-dimethylallyladenosine(37) in tRNA + diphosphate. Catalyzes the transfer of a dimethylallyl group onto the adenine at position 37 in tRNAs that read codons beginning with uridine, leading to the formation of N6-(dimethylallyl)adenosine (i(6)A). This Pseudomonas fluorescens (strain SBW25) protein is tRNA dimethylallyltransferase.